Reading from the N-terminus, the 1395-residue chain is DNA-directed RNA polymerase subunit beta' (1395 aa).

The Zn(2+) site is built by C70, C72, C85, and C88. Residues D461, D463, and D465 each contribute to the Mg(2+) site. Zn(2+)-binding residues include C815, C889, C896, and C899.

The protein belongs to the RNA polymerase beta' chain family. As to quaternary structure, the RNAP catalytic core consists of 2 alpha, 1 beta, 1 beta' and 1 omega subunit. When a sigma factor is associated with the core the holoenzyme is formed, which can initiate transcription. Requires Mg(2+) as cofactor. The cofactor is Zn(2+).

It catalyses the reaction RNA(n) + a ribonucleoside 5'-triphosphate = RNA(n+1) + diphosphate. Functionally, DNA-dependent RNA polymerase catalyzes the transcription of DNA into RNA using the four ribonucleoside triphosphates as substrates. In Ruthia magnifica subsp. Calyptogena magnifica, this protein is DNA-directed RNA polymerase subunit beta'.